The following is a 908-amino-acid chain: Oxysterol-binding protein 2 (908 aa).

The disordered stretch occupies residues 42 to 112; sequence SAFGSGPASK…GLWPGSENGT (71 aa). A compositionally biased stretch (polar residues) spans 81–90; that stretch reads EPGSQTTSVP. Residues 179–271 form the PH domain; the sequence is LDSYKGWLLK…WITALELAKA (93 aa). 3 disordered regions span residues 279-299, 413-445, and 822-843; these read TQSDDSGDDDEEPAAPADNSE, RAFCNTPGGPASSSKSFSEGSFLTSKGENSEED, and LMERGRWDEANTEKQRLEEKQR. S284 bears the Phosphoserine mark. Low complexity predominate over residues 424-437; that stretch reads SSSKSFSEGSFLTS.

It belongs to the OSBP family. As to quaternary structure, interacts with CCDC159. As to expression, expressed in the testis (at protein level). Expressed in postmeiotic germ cells of the testis.

The protein localises to the membrane. Its subcellular location is the cytoplasmic vesicle. The protein resides in the secretory vesicle. It localises to the acrosome. In terms of biological role, binds 7-ketocholesterol. Acts during spermatid development where its function is required prior to the removal of cytoplasm from the sperm head. This chain is Oxysterol-binding protein 2 (Osbp2), found in Mus musculus (Mouse).